A 258-amino-acid polypeptide reads, in one-letter code: Putative cysteine-rich repeat secretory protein 16 (258 aa).

The first 30 residues, 1 to 30 (MYYSSPTCFVLITIFAVVVTQLIFMRTVSS), serve as a signal peptide directing secretion. 2 consecutive Gnk2-homologous domains span residues 37–139 (YLNH…PFDT) and 144–247 (DKDN…LYPF).

The protein belongs to the cysteine-rich repeat secretory protein family.

The protein localises to the secreted. This is Putative cysteine-rich repeat secretory protein 16 (CRRSP16) from Arabidopsis thaliana (Mouse-ear cress).